A 307-amino-acid chain; its full sequence is Elongation factor Ts (307 aa).

The involved in Mg(2+) ion dislocation from EF-Tu stretch occupies residues 79 to 82; the sequence is TDFV.

The protein belongs to the EF-Ts family.

Its subcellular location is the cytoplasm. In terms of biological role, associates with the EF-Tu.GDP complex and induces the exchange of GDP to GTP. It remains bound to the aminoacyl-tRNA.EF-Tu.GTP complex up to the GTP hydrolysis stage on the ribosome. The chain is Elongation factor Ts from Rhizobium meliloti (strain 1021) (Ensifer meliloti).